The chain runs to 286 residues: Beta-lactamase SHV-34 (286 aa).

The first 21 residues, 1–21 (MRYFRLCIISLLATLPLAVHA), serve as a signal peptide directing secretion. Ser-66 acts as the Acyl-ester intermediate in catalysis. An intrachain disulfide couples Cys-73 to Cys-119. Residue Glu-164 is the Proton acceptor of the active site. 230–232 (KTG) is a binding site for substrate.

The protein belongs to the class-A beta-lactamase family.

The enzyme catalyses a beta-lactam + H2O = a substituted beta-amino acid. In terms of biological role, hydrolyzes ceftazidime and cefotaxime. This Escherichia coli protein is Beta-lactamase SHV-34 (bla).